Consider the following 39-residue polypeptide: Phosphatase RapI inhibitor (39 aa).

The propeptide occupies 1-34 (MKISRILLAAVILSSVFSITYLQSDHNTEIKVAA).

Belongs to the Phr family. Contains a predicted signal peptide cleavage site in the N-terminal region, however the propeptide is probably subject to only one processing event, at the N-terminal end of the mature peptide.

Its subcellular location is the secreted. It is found in the cytoplasm. In terms of biological role, intercellular signaling molecule that inhibits excision of the mobile genetic element ICEBs1 when cells are crowded by cells that contain ICEBs1 and produce the PhrI peptide. Secreted during production, but the mature peptide acts intracellularly, indicating that it needs to be imported into the cell to function. Acts by inhibiting RapI activity. This Bacillus subtilis (strain 168) protein is Phosphatase RapI inhibitor (phrI).